Here is a 268-residue protein sequence, read N- to C-terminus: Phosphatidylglycerol--prolipoprotein diacylglyceryl transferase (268 aa).

Transmembrane regions (helical) follow at residues 23–43, 58–78, 96–116, and 119–139; these read WYAL…LALA, FLTW…VLFY, GGMS…LFCW, and GLSP…GLFF. Arginine 141 provides a ligand contact to a 1,2-diacyl-sn-glycero-3-phospho-(1'-sn-glycerol). Transmembrane regions (helical) follow at residues 181–201, 206–226, and 238–258; these read SFLE…MPAV, GMTA…AEFF, and AGAT…VWLV.

It belongs to the Lgt family.

The protein localises to the cell inner membrane. It catalyses the reaction L-cysteinyl-[prolipoprotein] + a 1,2-diacyl-sn-glycero-3-phospho-(1'-sn-glycerol) = an S-1,2-diacyl-sn-glyceryl-L-cysteinyl-[prolipoprotein] + sn-glycerol 1-phosphate + H(+). Its pathway is protein modification; lipoprotein biosynthesis (diacylglyceryl transfer). Functionally, catalyzes the transfer of the diacylglyceryl group from phosphatidylglycerol to the sulfhydryl group of the N-terminal cysteine of a prolipoprotein, the first step in the formation of mature lipoproteins. This chain is Phosphatidylglycerol--prolipoprotein diacylglyceryl transferase, found in Azospirillum brasilense.